The chain runs to 210 residues: ATP-dependent Clp protease proteolytic subunit (210 aa).

The Nucleophile role is filled by Ser107. His132 is a catalytic residue.

It belongs to the peptidase S14 family. As to quaternary structure, fourteen ClpP subunits assemble into 2 heptameric rings which stack back to back to give a disk-like structure with a central cavity, resembling the structure of eukaryotic proteasomes.

Its subcellular location is the cytoplasm. It carries out the reaction Hydrolysis of proteins to small peptides in the presence of ATP and magnesium. alpha-casein is the usual test substrate. In the absence of ATP, only oligopeptides shorter than five residues are hydrolyzed (such as succinyl-Leu-Tyr-|-NHMec, and Leu-Tyr-Leu-|-Tyr-Trp, in which cleavage of the -Tyr-|-Leu- and -Tyr-|-Trp bonds also occurs).. Its function is as follows. Cleaves peptides in various proteins in a process that requires ATP hydrolysis. Has a chymotrypsin-like activity. Plays a major role in the degradation of misfolded proteins. The chain is ATP-dependent Clp protease proteolytic subunit from Cereibacter sphaeroides (strain ATCC 17029 / ATH 2.4.9) (Rhodobacter sphaeroides).